Here is a 137-residue protein sequence, read N- to C-terminus: Large ribosomal subunit protein uL16 (137 aa).

The protein belongs to the universal ribosomal protein uL16 family. As to quaternary structure, part of the 50S ribosomal subunit.

Binds 23S rRNA and is also seen to make contacts with the A and possibly P site tRNAs. This is Large ribosomal subunit protein uL16 from Coxiella burnetii (strain RSA 331 / Henzerling II).